A 454-amino-acid chain; its full sequence is Cell division cycle-associated 7-like protein (454 aa).

The short motif at 9-33 is the Integrase domain-binding motif 1 (IBM1) element; that stretch reads IPKEVADIFNAPSDDEEFVGFRDDV. Ser-21 is modified (phosphoserine). The Integrase domain-binding motif 2 (IBM2) motif lies at 65–91; it reads FTEELRRIFIEDTDSETEDFAGFTQSD. Thr-77 carries the phosphothreonine modification. Ser-79 bears the Phosphoserine mark. Phosphothreonine is present on residues Thr-81 and Thr-88. Disordered stretches follow at residues 103–169 and 188–213; these read VESD…LFSS and QVIQ…SSDA. A phosphoserine mark is found at Ser-105, Ser-108, Ser-117, Ser-138, Ser-139, Ser-162, Ser-195, and Ser-197. The segment covering 117–126 has biased composition (acidic residues); sequence SEEEEDEEED. The segment at 213 to 235 is MYC-binding; sequence ALLKRTMNIKENKAMLAQLLAEL. Residues Lys-222 and Lys-225 each participate in a glycyl lysine isopeptide (Lys-Gly) (interchain with G-Cter in SUMO2) cross-link. Residue Ser-261 is modified to Phosphoserine.

In terms of assembly, interacts with MYC. Interacts (via IBM motifs) with PSIP1 (via IBD domain); phosphorylation increases its affinity for PSIP1. In terms of processing, phosphorylation increases its interaction with PSIP1. Ubiquitous. Overexpressed in medulloblastoma.

It localises to the cytoplasm. The protein localises to the nucleus. Its function is as follows. Plays a role in transcriptional regulation as a repressor that inhibits monoamine oxidase A (MAOA) activity and gene expression by binding to the promoter. Plays an important oncogenic role in mediating the full transforming effect of MYC in medulloblastoma cells. Involved in apoptotic signaling pathways; May act downstream of P38-kinase and BCL-2, but upstream of CASP3/caspase-3 as well as CCND1/cyclin D1 and E2F1. The chain is Cell division cycle-associated 7-like protein (CDCA7L) from Homo sapiens (Human).